Reading from the N-terminus, the 179-residue chain is Large ribosomal subunit protein uL5 (179 aa).

The protein belongs to the universal ribosomal protein uL5 family. Part of the 50S ribosomal subunit; part of the 5S rRNA/L5/L18/L25 subcomplex. Contacts the 5S rRNA and the P site tRNA. Forms a bridge to the 30S subunit in the 70S ribosome.

This is one of the proteins that bind and probably mediate the attachment of the 5S RNA into the large ribosomal subunit, where it forms part of the central protuberance. In the 70S ribosome it contacts protein S13 of the 30S subunit (bridge B1b), connecting the 2 subunits; this bridge is implicated in subunit movement. Contacts the P site tRNA; the 5S rRNA and some of its associated proteins might help stabilize positioning of ribosome-bound tRNAs. In Thermoanaerobacter sp. (strain X514), this protein is Large ribosomal subunit protein uL5.